Consider the following 479-residue polypeptide: Flotillin-like protein 3 (479 aa).

Cysteine 36 carries S-palmitoyl cysteine lipidation. Coiled coils occupy residues 227–251 (KVKT…AALA) and 306–326 (EYET…KQAE).

It belongs to the band 7/mec-2 family. Flotillin subfamily. In terms of processing, may be palmitoylated.

The protein localises to the cell membrane. It is found in the membrane. It localises to the caveola. May act as a scaffolding protein within caveolar membranes, functionally participating in formation of caveolae or caveolae-like vesicles. The chain is Flotillin-like protein 3 (FLOT3) from Arabidopsis thaliana (Mouse-ear cress).